The sequence spans 300 residues: Solute carrier family 25 member 35 (300 aa).

Solcar repeat units lie at residues 1-90, 100-193, and 203-294; these read MDFL…AEAG, HSPA…TKDL, and QSWK…LRSL. Transmembrane regions (helical) follow at residues 38–58, 59–79, 91–119, 169–190, 205–225, and 277–300; these read TYQR…KVDG, LAAL…MNGI, GYLH…GAYL, ALGG…FSST, WKLA…AMAP, and LGPH…TDTK.

It belongs to the mitochondrial carrier (TC 2.A.29) family.

Its subcellular location is the mitochondrion inner membrane. It catalyses the reaction a dicarboxylate(in) + sulfate(out) = a dicarboxylate(out) + sulfate(in). Functionally, putative antiporter that exchanges dicarboxylates and sulfur oxoanions across the inner membrane of mitochondria. The polypeptide is Solute carrier family 25 member 35 (SLC25A35) (Homo sapiens (Human)).